The chain runs to 229 residues: UPF0758 protein MM_2791 (229 aa).

The MPN domain occupies 106 to 228 (KISSPKDVYT…YVSLKDEGFV (123 aa)). Zn(2+)-binding residues include H177, H179, and D190. A JAMM motif motif is present at residues 177-190 (HNHPSGDPSPSRED).

It belongs to the UPF0758 family.

This is UPF0758 protein MM_2791 from Methanosarcina mazei (strain ATCC BAA-159 / DSM 3647 / Goe1 / Go1 / JCM 11833 / OCM 88) (Methanosarcina frisia).